We begin with the raw amino-acid sequence, 411 residues long: Multifunctional CCA protein (411 aa).

ATP contacts are provided by G8 and R11. Positions 8 and 11 each coordinate CTP. Mg(2+) is bound by residues D21 and D23. R91, R137, and R140 together coordinate ATP. Residues R91, R137, and R140 each coordinate CTP. In terms of domain architecture, HD spans 226 to 327 (TGVHVMLVID…LRFLQETDAL (102 aa)).

This sequence belongs to the tRNA nucleotidyltransferase/poly(A) polymerase family. Bacterial CCA-adding enzyme type 1 subfamily. As to quaternary structure, monomer. Can also form homodimers and oligomers. Requires Mg(2+) as cofactor. Ni(2+) serves as cofactor.

The catalysed reaction is a tRNA precursor + 2 CTP + ATP = a tRNA with a 3' CCA end + 3 diphosphate. It catalyses the reaction a tRNA with a 3' CCA end + 2 CTP + ATP = a tRNA with a 3' CCACCA end + 3 diphosphate. Its function is as follows. Catalyzes the addition and repair of the essential 3'-terminal CCA sequence in tRNAs without using a nucleic acid template. Adds these three nucleotides in the order of C, C, and A to the tRNA nucleotide-73, using CTP and ATP as substrates and producing inorganic pyrophosphate. tRNA 3'-terminal CCA addition is required both for tRNA processing and repair. Also involved in tRNA surveillance by mediating tandem CCA addition to generate a CCACCA at the 3' terminus of unstable tRNAs. While stable tRNAs receive only 3'-terminal CCA, unstable tRNAs are marked with CCACCA and rapidly degraded. The protein is Multifunctional CCA protein of Methylobacillus flagellatus (strain ATCC 51484 / DSM 6875 / VKM B-1610 / KT).